Here is a 223-residue protein sequence, read N- to C-terminus: Urease accessory protein UreF (223 aa).

The protein belongs to the UreF family. In terms of assembly, ureD, UreF and UreG form a complex that acts as a GTP-hydrolysis-dependent molecular chaperone, activating the urease apoprotein by helping to assemble the nickel containing metallocenter of UreC. The UreE protein probably delivers the nickel.

Its subcellular location is the cytoplasm. Functionally, required for maturation of urease via the functional incorporation of the urease nickel metallocenter. This is Urease accessory protein UreF from Mesorhizobium japonicum (strain LMG 29417 / CECT 9101 / MAFF 303099) (Mesorhizobium loti (strain MAFF 303099)).